Consider the following 307-residue polypeptide: Tyrosine recombinase XerC (307 aa).

A Core-binding (CB) domain is found at 9-95 (ETLSLAIDSF…ALRSFLDWQV (87 aa)). The 181-residue stretch at 116–296 (HLPKNMDVDE…DFQHLAKVYD (181 aa)) folds into the Tyr recombinase domain. Residues Arg-155, Lys-179, His-248, Arg-251, and His-274 contribute to the active site. Tyr-283 serves as the catalytic O-(3'-phospho-DNA)-tyrosine intermediate.

It belongs to the 'phage' integrase family. XerC subfamily. In terms of assembly, forms a cyclic heterotetrameric complex composed of two molecules of XerC and two molecules of XerD, in which XerC interacts with XerD via its C-terminal region, XerD interacts with XerC via its C-terminal region and so on.

It is found in the cytoplasm. With respect to regulation, ftsK may regulate the catalytic switch between XerC and XerD in the heterotetrameric complex during the two steps of the recombination process. Its function is as follows. Site-specific tyrosine recombinase, which acts by catalyzing the cutting and rejoining of the recombining DNA molecules. Binds cooperatively to specific DNA consensus sequences that are separated from XerD binding sites by a short central region, forming the heterotetrameric XerC-XerD complex that recombines DNA substrates. The complex is essential to convert dimers of the bacterial chromosome into monomers to permit their segregation at cell division. It also contributes to the segregational stability of plasmids. In the complex XerC specifically exchanges the top DNA strands. This Proteus mirabilis protein is Tyrosine recombinase XerC.